Reading from the N-terminus, the 316-residue chain is 4-hydroxy-3-methylbut-2-enyl diphosphate reductase (316 aa).

Cys-12 is a binding site for [4Fe-4S] cluster. (2E)-4-hydroxy-3-methylbut-2-enyl diphosphate contacts are provided by His-41 and His-74. Dimethylallyl diphosphate-binding residues include His-41 and His-74. Residues His-41 and His-74 each contribute to the isopentenyl diphosphate site. Cys-96 provides a ligand contact to [4Fe-4S] cluster. His-124 contacts (2E)-4-hydroxy-3-methylbut-2-enyl diphosphate. Dimethylallyl diphosphate is bound at residue His-124. His-124 contacts isopentenyl diphosphate. The active-site Proton donor is Glu-126. Thr-167 provides a ligand contact to (2E)-4-hydroxy-3-methylbut-2-enyl diphosphate. [4Fe-4S] cluster is bound at residue Cys-197. Residues Ser-225, Ser-226, Asn-227, and Ser-269 each contribute to the (2E)-4-hydroxy-3-methylbut-2-enyl diphosphate site. Dimethylallyl diphosphate contacts are provided by Ser-225, Ser-226, Asn-227, and Ser-269. 4 residues coordinate isopentenyl diphosphate: Ser-225, Ser-226, Asn-227, and Ser-269.

This sequence belongs to the IspH family. In terms of assembly, homodimer. It depends on [4Fe-4S] cluster as a cofactor.

The enzyme catalyses isopentenyl diphosphate + 2 oxidized [2Fe-2S]-[ferredoxin] + H2O = (2E)-4-hydroxy-3-methylbut-2-enyl diphosphate + 2 reduced [2Fe-2S]-[ferredoxin] + 2 H(+). The catalysed reaction is dimethylallyl diphosphate + 2 oxidized [2Fe-2S]-[ferredoxin] + H2O = (2E)-4-hydroxy-3-methylbut-2-enyl diphosphate + 2 reduced [2Fe-2S]-[ferredoxin] + 2 H(+). The protein operates within isoprenoid biosynthesis; dimethylallyl diphosphate biosynthesis; dimethylallyl diphosphate from (2E)-4-hydroxy-3-methylbutenyl diphosphate: step 1/1. It functions in the pathway isoprenoid biosynthesis; isopentenyl diphosphate biosynthesis via DXP pathway; isopentenyl diphosphate from 1-deoxy-D-xylulose 5-phosphate: step 6/6. Catalyzes the conversion of 1-hydroxy-2-methyl-2-(E)-butenyl 4-diphosphate (HMBPP) into a mixture of isopentenyl diphosphate (IPP) and dimethylallyl diphosphate (DMAPP). Acts in the terminal step of the DOXP/MEP pathway for isoprenoid precursor biosynthesis. The protein is 4-hydroxy-3-methylbut-2-enyl diphosphate reductase of Salmonella typhi.